We begin with the raw amino-acid sequence, 793 residues long: Short transient receptor potential channel 1 (793 aa).

The interval 1–30 (MMAALYPSTDLSGVSSSSLPSSPSSSSPNE) is disordered. The Cytoplasmic segment spans residues 1-345 (MMAALYPSTD…FGQMSGYRRK (345 aa)). Over residues 15-28 (SSSSLPSSPSSSSP) the composition is skewed to low complexity. ANK repeat units follow at residues 46-75 (LNEK…SGDL), 83-109 (LGRN…YGCQ), 111-156 (ADAL…EYST), and 158-180 (MDVA…MLLK). Zn(2+) is bound by residues histidine 189, cysteine 193, cysteine 195, and cysteine 198. The discontinuously helical intramembrane region spans 346–379 (PTCKKIMTVLTVGIFWPVLSLCYLIAPKSQFGRI). Topologically, residues 380-386 (IHTPFMK) are cytoplasmic. The chain crosses the membrane as a helical span at residues 387-404 (FIIHGASYFTFLLLLNLY). Residues 405–422 (SLVYNEDKKNTMGPALER) are Extracellular-facing. Residues 423–439 (IDYLLILWIIGMIWSDI) form a helical membrane-spanning segment. At 440–455 (KRLWYEGLEDFLEESR) the chain is on the cytoplasmic side. The helical transmembrane segment at 456–475 (NQLSFVMNSLYLATFALKVV) threads the bilayer. At 476–496 (AHNKFHDFADRKDWDAFHPTL) the chain is on the extracellular side. The helical transmembrane segment at 497-517 (VAEGLFAFANVLSYLRLFFMY) threads the bilayer. The Cytoplasmic portion of the chain corresponds to 518-536 (TTSSILGPLQISMGQMLQD). The helical transmembrane segment at 537–558 (FGKFLGMFLLVLFSFTIGLTQL) threads the bilayer. Residues 559–623 (YDKGYTSKEQ…GEELQSFVGA (65 aa)) lie on the Extracellular side of the membrane. Cysteine 571 and cysteine 576 are oxidised to a cystine. A helical membrane pass occupies residues 624 to 644 (VIVGTYNVVVVIVLTKLLVAM). Over 645–793 (LHKSFQLIAN…SKYAMFYPRN (149 aa)) the chain is Cytoplasmic.

The protein belongs to the transient receptor (TC 1.A.4) family. STrpC subfamily. TRPC1 sub-subfamily. Heterotetramer with TRPC4 and/or TRPC5. Forms a heteromeric ion channel with TRPC4, with a 1:3 TRPC1:TRPC4 stoichiometry. Unlike other TRP channel proteins, does not form a homomeric channel. Interacts with TRPC4AP. Interacts with ITPR3. Interacts with MX1 and RNF24. Interacts with FKBP4. Interacts with PLSCR1. Interacts with PKD2L2. Forms a heterotetramer with PKD2 with a 2:2 stoichiometry; has distinct channel properties separate from PKD2 or TRPC1 homomers alone. Post-translationally, activation of PRKCA induces phosphorylation of TRPC1 and subsequent Ca2+ entry into cells.

The protein resides in the cell membrane. The enzyme catalyses Ca(2+)(in) = Ca(2+)(out). It catalyses the reaction Na(+)(in) = Na(+)(out). It carries out the reaction Li(+)(in) = Li(+)(out). The catalysed reaction is Cs(+)(in) = Cs(+)(out). Its activity is regulated as follows. May be operated by a phosphatidylinositol second messenger system activated by receptor tyrosine kinases or G-protein coupled receptors. Also activated by intracellular calcium store depletion. Forms a receptor-activated non-selective calcium permeant cation channel. Forms a heteromeric ion channel with TRPC4 or TRPC5 that has reduced calcium permeability compared to the homomeric TRPC4 or TRPC5 channel. Also permeable to monovalent ions including sodium, lithium and cesium ions. This Mus musculus (Mouse) protein is Short transient receptor potential channel 1 (Trpc1).